Consider the following 372-residue polypeptide: 3-isopropylmalate dehydrogenase (372 aa).

79 to 90 lines the NAD(+) pocket; the sequence is GPKWQGGAVRPE. The substrate site is built by Arg97, Arg107, Arg136, and Asp225. Positions 225, 250, and 254 each coordinate Mg(2+). 289–300 serves as a coordination point for NAD(+); it reads GSAPDLPAGKAN.

The protein belongs to the isocitrate and isopropylmalate dehydrogenases family. As to quaternary structure, homodimer. Mg(2+) is required as a cofactor. It depends on Mn(2+) as a cofactor.

Its subcellular location is the cytoplasm. It carries out the reaction (2R,3S)-3-isopropylmalate + NAD(+) = 4-methyl-2-oxopentanoate + CO2 + NADH. The protein operates within amino-acid biosynthesis; L-leucine biosynthesis; L-leucine from 3-methyl-2-oxobutanoate: step 3/4. Functionally, catalyzes the oxidation of 3-carboxy-2-hydroxy-4-methylpentanoate (3-isopropylmalate) to 3-carboxy-4-methyl-2-oxopentanoate. The product decarboxylates to 4-methyl-2 oxopentanoate. This chain is 3-isopropylmalate dehydrogenase (LEU2), found in Eremothecium gossypii (strain ATCC 10895 / CBS 109.51 / FGSC 9923 / NRRL Y-1056) (Yeast).